Consider the following 97-residue polypeptide: Large ribosomal subunit protein uL23 (97 aa).

This sequence belongs to the universal ribosomal protein uL23 family. Part of the 50S ribosomal subunit. Contacts protein L29, and trigger factor when it is bound to the ribosome.

In terms of biological role, one of the early assembly proteins it binds 23S rRNA. One of the proteins that surrounds the polypeptide exit tunnel on the outside of the ribosome. Forms the main docking site for trigger factor binding to the ribosome. In Myxococcus xanthus (strain DK1622), this protein is Large ribosomal subunit protein uL23.